A 192-amino-acid polypeptide reads, in one-letter code: Riboflavin kinase (192 aa).

Thr-47 and Asn-49 together coordinate Mg(2+). Glu-129 serves as the catalytic Nucleophile.

Belongs to the flavokinase family. It depends on Zn(2+) as a cofactor. Mg(2+) serves as cofactor.

The catalysed reaction is riboflavin + ATP = FMN + ADP + H(+). Its pathway is cofactor biosynthesis; FMN biosynthesis; FMN from riboflavin (ATP route): step 1/1. Its function is as follows. Catalyzes the phosphorylation of riboflavin (vitamin B2) to form flavin mononucleotide (FMN) coenzyme. The sequence is that of Riboflavin kinase (FMN1) from Yarrowia lipolytica (strain CLIB 122 / E 150) (Yeast).